The following is a 449-amino-acid chain: Myb family transcription factor PHL6 (449 aa).

The segment at 49–72 (PFIRSQSPDSPGQLWPKNSSQSTF) is disordered. An HTH myb-type domain is found at 238 to 298 (ANQKSRMRWT…HLQKYRLAKY (61 aa)). The H-T-H motif DNA-binding region spans 269–294 (PKAVKKLMNVEGLTIYHVKSHLQKYR). A disordered region spans residues 301 to 327 (EKKEEKRTDNSEEKKLALSKSEADEKK). A coiled coil region spans residues 334-354 (TEALRMQMEVQKQLHEQLEVQ). Positions 347–352 (LHEQLE) match the LHEQLE motif. The interval 376-449 (RKTGRWISSS…NIAESEDPKR (74 aa)) is disordered. Residues 381-410 (WISSSSQTVLSPSDDSIPDSQNMSKTKASS) show a composition bias toward polar residues.

Belongs to the MYB-CC family.

It is found in the nucleus. This is Myb family transcription factor PHL6 from Arabidopsis thaliana (Mouse-ear cress).